Consider the following 241-residue polypeptide: Accessory protein p30II (241 aa).

Short sequence motifs (nuclear localization signal) lie at residues arginine 73–arginine 78 and glycine 91–arginine 98. Composition is skewed to low complexity over residues cysteine 79 to serine 100 and proline 107 to serine 136. Residues cysteine 79 to threonine 151 form a disordered region. Positions leucine 175–arginine 184 match the Mitochondrial targeting signal motif.

This sequence belongs to the HTLV-1 accessory protein p30II family. As to quaternary structure, p30II binds to the KIX domains of CREBBP and EP300.

Its subcellular location is the host nucleus. The protein resides in the host nucleolus. It localises to the host mitochondrion inner membrane. Functionally, p30II is a multifunctional regulator that sequesters EP300/CREBBP and down-regulates CREB-responsive element (CRE) and Tax-responsive element (TRE) mediated transcription. Specifically binds and represses tax/rex mRNA nuclear export. Since Tax and Rex are positive regulators of viral gene expression, their inhibition by p30II reduces virion production, and allows the virus to escape the host immune surveillance and persist latently in an immune-competent host. P13II increases mitochondrial permeability to monovalent cations, producing a rapid, membrane potential-dependent influx of potassium. This could involve a channel-forming activity. Interferes with cell proliferation and transformation and promotes apoptosis induced by ceramide and Fas ligand, probably using the Ras signaling. This is Accessory protein p30II from Human T-cell leukemia virus 1 (strain Japan ATK-1 subtype A) (HTLV-1).